Consider the following 388-residue polypeptide: Succinate--CoA ligase [ADP-forming] subunit beta (388 aa).

One can recognise an ATP-grasp domain in the interval Lys9–His244. ATP-binding positions include Lys46, Gly53–Gly55, Glu99, Thr102, and Glu107. Residues Asn199 and Asp213 each coordinate Mg(2+). Substrate is bound by residues Asn264 and Gly321–Val323.

Belongs to the succinate/malate CoA ligase beta subunit family. As to quaternary structure, heterotetramer of two alpha and two beta subunits. The cofactor is Mg(2+).

The enzyme catalyses succinate + ATP + CoA = succinyl-CoA + ADP + phosphate. It catalyses the reaction GTP + succinate + CoA = succinyl-CoA + GDP + phosphate. It participates in carbohydrate metabolism; tricarboxylic acid cycle; succinate from succinyl-CoA (ligase route): step 1/1. In terms of biological role, succinyl-CoA synthetase functions in the citric acid cycle (TCA), coupling the hydrolysis of succinyl-CoA to the synthesis of either ATP or GTP and thus represents the only step of substrate-level phosphorylation in the TCA. The beta subunit provides nucleotide specificity of the enzyme and binds the substrate succinate, while the binding sites for coenzyme A and phosphate are found in the alpha subunit. The polypeptide is Succinate--CoA ligase [ADP-forming] subunit beta (Edwardsiella ictaluri (strain 93-146)).